We begin with the raw amino-acid sequence, 274 residues long: ATP synthase subunit a (274 aa).

5 helical membrane passes run 43–63, 103–123, 149–169, 223–243, and 245–265; these read TLNI…LFVF, VIAP…MMDL, DVSI…FYSI, LIFI…LSLP, and AIFH…LTIV.

This sequence belongs to the ATPase A chain family. In terms of assembly, F-type ATPases have 2 components, CF(1) - the catalytic core - and CF(0) - the membrane proton channel. CF(1) has five subunits: alpha(3), beta(3), gamma(1), delta(1), epsilon(1). CF(0) has three main subunits: a(1), b(2) and c(9-12). The alpha and beta chains form an alternating ring which encloses part of the gamma chain. CF(1) is attached to CF(0) by a central stalk formed by the gamma and epsilon chains, while a peripheral stalk is formed by the delta and b chains.

It is found in the cell inner membrane. Key component of the proton channel; it plays a direct role in the translocation of protons across the membrane. The chain is ATP synthase subunit a from Yersinia enterocolitica serotype O:8 / biotype 1B (strain NCTC 13174 / 8081).